The sequence spans 81 residues: Short neurotoxin 1 (81 aa).

An N-terminal signal peptide occupies residues 1 to 21 (MKTLLLTLVVVTIVCLDLGYT). Disulfide bonds link C24–C43, C38–C60, C62–C73, and C74–C79.

This sequence belongs to the three-finger toxin family. Short-chain subfamily. Type I alpha-neurotoxin sub-subfamily. Expressed by the venom gland.

The protein resides in the secreted. In terms of biological role, binds to muscle nicotinic acetylcholine receptor (nAChR) and inhibit acetylcholine from binding to the receptor, thereby impairing neuromuscular transmission. This Tropidechis carinatus (Australian rough-scaled snake) protein is Short neurotoxin 1.